Consider the following 157-residue polypeptide: Ribosome maturation factor RimP (157 aa).

The protein belongs to the RimP family.

It localises to the cytoplasm. Its function is as follows. Required for maturation of 30S ribosomal subunits. The polypeptide is Ribosome maturation factor RimP (Bacillus licheniformis (strain ATCC 14580 / DSM 13 / JCM 2505 / CCUG 7422 / NBRC 12200 / NCIMB 9375 / NCTC 10341 / NRRL NRS-1264 / Gibson 46)).